Here is a 175-residue protein sequence, read N- to C-terminus: ATP synthase subunit b (175 aa).

The chain crosses the membrane as a helical span at residues 20-40 (LIFWTAITFVIVLLILKKIAW).

This sequence belongs to the ATPase B chain family. F-type ATPases have 2 components, F(1) - the catalytic core - and F(0) - the membrane proton channel. F(1) has five subunits: alpha(3), beta(3), gamma(1), delta(1), epsilon(1). F(0) has four main subunits: a(1), b(2) and c(10-14). The alpha and beta chains form an alternating ring which encloses part of the gamma chain. F(1) is attached to F(0) by a central stalk formed by the gamma and epsilon chains, while a peripheral stalk is formed by the delta and b chains.

The protein localises to the cell inner membrane. Its function is as follows. F(1)F(0) ATP synthase produces ATP from ADP in the presence of a proton or sodium gradient. F-type ATPases consist of two structural domains, F(1) containing the extramembraneous catalytic core and F(0) containing the membrane proton channel, linked together by a central stalk and a peripheral stalk. During catalysis, ATP synthesis in the catalytic domain of F(1) is coupled via a rotary mechanism of the central stalk subunits to proton translocation. Component of the F(0) channel, it forms part of the peripheral stalk, linking F(1) to F(0). The sequence is that of ATP synthase subunit b from Pelodictyon phaeoclathratiforme (strain DSM 5477 / BU-1).